The chain runs to 248 residues: uncharacterized protein (248 aa).

The first 22 residues, 1–22, serve as a signal peptide directing secretion; it reads MNKLQSYFIASVLYVMTPHAFA.

The protein to E.coli YjbG.

This is an uncharacterized protein from Escherichia coli (strain K12).